Reading from the N-terminus, the 132-residue chain is C-X-C motif chemokine 5 (132 aa).

An N-terminal signal peptide occupies residues 1-40 (MSLQLRSSARIPSGSISPFMRMAPLAFLLLFTLPQHLAEA). Disulfide bonds link Cys-53-Cys-79 and Cys-55-Cys-95.

It belongs to the intercrine alpha (chemokine CxC) family. As to quaternary structure, monomer. Homodimer. Post-translationally, GCP-2(1-78) and GCP-2(9-78) are produced by proteolytic cleavage after secretion from fibroblasts and epithelial cells. GCP-2(9-78) is the most prominent form. A number of additional N-terminal (processed between pos. 41 and 48) and C-terminal (processed between pos. 118 and 132) processed forms have been identified, probably also representing intermediate states.

The protein localises to the secreted. Its function is as follows. May participate in the recruitment of inflammatory cells by injured or infected tissue. GCP-2(1-78) and, more potent, GCP-2(9-78) attract neutrophils and are involved in neutrophil activation. The chain is C-X-C motif chemokine 5 (Cxcl5) from Mus musculus (Mouse).